The sequence spans 1379 residues: ABC multidrug transporter MDR2 (1379 aa).

Residues 65 to 85 (IALIVIGTIAGIGAGIPFPLL) form a helical membrane-spanning segment. Residues 69 to 367 (VIGTIAGIGA…MAPFMHIFAS (299 aa)) form the ABC transmembrane type-1 1 domain. N97 carries an N-linked (GlcNAc...) asparagine glycan. Helical transmembrane passes span 119-139 (VLQVIYVSILNFVCMYIHTGC), 193-213 (KVGLFIGTISYFVAAYIVAFL), 215-235 (VATIAAMLMSVVPIYFLMAFG), 301-321 (IQFGMLYFVAYASNALAFWQG), and 336-356 (VSVGAVYTVIFVLLDASFVLS). One can recognise an ABC transporter 1 domain in the interval 403 to 682 (IELQDVTFNY…DGVYAGMVRL (280 aa)). 438–445 (GTSGSGKS) contributes to the ATP binding site. 2 N-linked (GlcNAc...) asparagine glycosylation sites follow: N552 and N633. The disordered stretch occupies residues 738 to 758 (YMPEEADSLPTEPENEKEKPK). 4 helical membrane passes run 781–801 (LGLITSIMIGVSYTGEAVIFG), 820–840 (GMLFGLLFFILAIVKFAAVIV), 901–921 (IGVLFSTVANLFAGVILSHVI), and 922–942 (AWRIAVVLLATLPVLLASGVL). The region spanning 781–1068 (LGLITSIMIG…MFALVPDISK (288 aa)) is the ABC transmembrane type-1 2 domain. N989 is a glycosylation site (N-linked (GlcNAc...) asparagine). 2 helical membrane passes run 1008-1028 (FWLSLAYSISTLVYALAYWWG) and 1032-1052 (ILAGMYTQVQFFIVLPALLFS). Residues 1135–1374 (VQFRNVHFRY…CESYRANVIH (240 aa)) enclose the ABC transporter 2 domain. Residue 1170-1177 (GPSGSGKS) participates in ATP binding.

It belongs to the ABC transporter superfamily. ABCB family. Multidrug resistance exporter (TC 3.A.1.201) subfamily.

Its subcellular location is the cell membrane. In terms of biological role, pleiotropic ABC efflux transporter that may be involved in the modulation susceptibility to a wide range of unrelated cytotoxic compounds. The chain is ABC multidrug transporter MDR2 from Trichophyton equinum (strain ATCC MYA-4606 / CBS 127.97) (Horse ringworm fungus).